Reading from the N-terminus, the 79-residue chain is Short neurotoxin 7 (79 aa).

The signal sequence occupies residues 1–21 (MKTLLLTLVMVTIMCLDLGYT). Disulfide bonds link Cys24/Cys41, Cys34/Cys59, Cys63/Cys71, and Cys72/Cys77.

It belongs to the three-finger toxin family. Short-chain subfamily. Type III alpha-neurotoxin sub-subfamily. In terms of tissue distribution, expressed by the venom gland.

It is found in the secreted. Its function is as follows. Binds with high affinity to muscle nicotinic acetylcholine receptor (nAChR) and hinders acetylcholine binding to the receptor, thereby impairing neuromuscular transmission. Competes with the binding of alpha-bungarotoxin on muscle AChR (from Torpedo) (IC(50)=0.30 uM). In vivo, causes muscle paralysis, spasms and increased respiration. The sequence is that of Short neurotoxin 7 from Pseudonaja textilis (Eastern brown snake).